We begin with the raw amino-acid sequence, 108 residues long: Protein S100-A15A (108 aa).

An EF-hand domain is found at 53–88 (KEPYYITELFQAADKNKDNQICFDEFLYILGKLVKD). Ca(2+) contacts are provided by D66, N68, D70, Q72, and E77.

Belongs to the S-100 family.

This Pongo abelii (Sumatran orangutan) protein is Protein S100-A15A (S100A15A).